The sequence spans 276 residues: Large ribosomal subunit protein uL2 (276 aa).

Disordered regions lie at residues 1–61 and 224–276; these read MALK…HKQK and AMNP…KKKN. Basic and acidic residues predominate over residues 15–31; that stretch reads GRIDLRKDEITAQKPEK.

The protein belongs to the universal ribosomal protein uL2 family. In terms of assembly, part of the 50S ribosomal subunit. Forms a bridge to the 30S subunit in the 70S ribosome.

In terms of biological role, one of the primary rRNA binding proteins. Required for association of the 30S and 50S subunits to form the 70S ribosome, for tRNA binding and peptide bond formation. It has been suggested to have peptidyltransferase activity; this is somewhat controversial. Makes several contacts with the 16S rRNA in the 70S ribosome. This chain is Large ribosomal subunit protein uL2, found in Treponema denticola (strain ATCC 35405 / DSM 14222 / CIP 103919 / JCM 8153 / KCTC 15104).